The primary structure comprises 298 residues: Zinc transport system membrane protein TroC (298 aa).

8 consecutive transmembrane segments (helical) span residues 16–36, 41–61, 68–88, 97–117, 144–164, 187–207, 229–249, and 255–275; these read VVLGTLFLGLGSGLVGSFAVL, LFGDAVSHATLPGIVIAFLLT, ILLLGAALSGLVGTVVMLMVM, GAQGIVLGVFLGFGFLLLTHV, VLLIIAMEVVIGLLVLLFWKE, FMLTALIVVAVVVGVQAVGVI, VLCALAALFGGVSGVSGSVVS, and LSTGPVIVLVLTGIALVSIML.

Belongs to the ABC-3 integral membrane protein family.

It is found in the cell membrane. Functionally, part of an ATP-driven transport system TroABCD for zinc. The sequence is that of Zinc transport system membrane protein TroC (troC) from Treponema pallidum (strain Nichols).